The following is a 315-amino-acid chain: DNA-directed RNA polymerase subunit alpha (315 aa).

Residues 1 to 228 form an alpha N-terminal domain (alpha-NTD) region; sequence MIEIEKPKIE…EHLNLFIDLS (228 aa). Residues 245-315 are alpha C-terminal domain (alpha-CTD); the sequence is KEKVLEMTIE…LGLSLAPSED (71 aa).

This sequence belongs to the RNA polymerase alpha chain family. Homodimer. The RNAP catalytic core consists of 2 alpha, 1 beta, 1 beta' and 1 omega subunit. When a sigma factor is associated with the core the holoenzyme is formed, which can initiate transcription.

The enzyme catalyses RNA(n) + a ribonucleoside 5'-triphosphate = RNA(n+1) + diphosphate. In terms of biological role, DNA-dependent RNA polymerase catalyzes the transcription of DNA into RNA using the four ribonucleoside triphosphates as substrates. This Acetivibrio thermocellus (strain ATCC 27405 / DSM 1237 / JCM 9322 / NBRC 103400 / NCIMB 10682 / NRRL B-4536 / VPI 7372) (Clostridium thermocellum) protein is DNA-directed RNA polymerase subunit alpha.